The chain runs to 122 residues: UPF0102 protein cgR_1859 (122 aa).

Belongs to the UPF0102 family.

This is UPF0102 protein cgR_1859 from Corynebacterium glutamicum (strain R).